Consider the following 320-residue polypeptide: Ribose-phosphate pyrophosphokinase (320 aa).

ATP is bound by residues 43–45 and 102–103; these read DGE and RQ. Mg(2+)-binding residues include His136 and Asp178. Residue Lys201 is part of the active site. Residues Arg203, Asp227, and 231-235 each bind D-ribose 5-phosphate; that span reads DTAGT.

This sequence belongs to the ribose-phosphate pyrophosphokinase family. Class I subfamily. In terms of assembly, homohexamer. Mg(2+) serves as cofactor.

The protein resides in the cytoplasm. It catalyses the reaction D-ribose 5-phosphate + ATP = 5-phospho-alpha-D-ribose 1-diphosphate + AMP + H(+). Its pathway is metabolic intermediate biosynthesis; 5-phospho-alpha-D-ribose 1-diphosphate biosynthesis; 5-phospho-alpha-D-ribose 1-diphosphate from D-ribose 5-phosphate (route I): step 1/1. In terms of biological role, involved in the biosynthesis of the central metabolite phospho-alpha-D-ribosyl-1-pyrophosphate (PRPP) via the transfer of pyrophosphoryl group from ATP to 1-hydroxyl of ribose-5-phosphate (Rib-5-P). In Clostridium tetani (strain Massachusetts / E88), this protein is Ribose-phosphate pyrophosphokinase.